The chain runs to 638 residues: Exotoxin A (638 aa).

Residues 1-25 (MHLTPHWIPLVASLGLLAGGSFASA) form the signal peptide. The domain Ia (required for target cell recognition) stretch occupies residues 26–277 (AEEAFDLWNE…VISHRLHFPE (252 aa)). Residues 278-389 (GGSLAALTAH…TGNDEAGAAS (112 aa)) are II (required for translocation in target cell cytoplasm). A disulfide bond links cysteine 290 and cysteine 312. The segment at 390–429 (ADVVSLTCPVAAGECAGPADSGDALLERNYPTGAEFLGDG) is domain Ib. The interval 430–638 (GDISFSTRGT…PGKPPREDLK (209 aa)) is III (required for ADP-ribosyl activity). NAD(+)-binding positions include 465-467 (HGT), serine 474, 479-485 (GVRARSQ), and glutamate 578. Glutamate 578 is an active-site residue. Residues 596–638 (IPTDPRNVGGDLDPSSIPDKEQAISALPDYASQPGKPPREDLK) form a disordered region.

In terms of processing, the 8 cysteines participate in intrachain disulfide bonds.

It carries out the reaction diphthamide-[translation elongation factor 2] + NAD(+) = N-(ADP-D-ribosyl)diphthamide-[translation elongation factor 2] + nicotinamide + H(+). Inhibited by 1,8-naphthalimide (NAP) as well as a number of poly(ADP-ribose) polymerase inhibitors and other compounds. In terms of biological role, an NAD-dependent ADP-ribosyltransferase (ADPRT). Catalyzes the transfer of the ADP ribosyl moiety of oxidized NAD (NAD(+)) onto eukaryotic elongation factor 2 (eEF-2) thus arresting protein synthesis. Has an LD(50) of 65 ng/ml against the human lung epithelial cell line C38. This Pseudomonas aeruginosa (strain ATCC 15692 / DSM 22644 / CIP 104116 / JCM 14847 / LMG 12228 / 1C / PRS 101 / PAO1) protein is Exotoxin A.